The chain runs to 1069 residues: ISWI chromatin-remodeling complex ATPase CHR17 (1069 aa).

The segment covering 1–10 (MARASKREVS) has biased composition (basic and acidic residues). Disordered regions lie at residues 1–93 (MARA…KEMQ) and 136–168 (FAKS…EECL). Acidic residues-rich tracts occupy residues 15 to 37 (YSSE…DELE) and 45 to 78 (SDEE…DEEK). Basic and acidic residues predominate over residues 79–93 (AEISKREKARLKEMQ). A compositionally biased stretch (basic residues) spans 146-156 (KKGKGRGRHSS). The Helicase ATP-binding domain maps to 206 to 371 (IRLYENGING…WALLNFLLPE (166 aa)). 219–226 (DEMGLGKT) is an ATP binding site. The DEAH box motif lies at 322-325 (DEAH). The Helicase C-terminal domain occupies 499-650 (LLDKLLPKLK…ALVIQQGRLA (152 aa)). 2 consecutive SANT domains span residues 845-897 (EGFS…VRYK) and 946-1007 (QNKG…DTLI). A disordered region spans residues 1016–1069 (EFDERERQARKEKKLSKSATPSKRPSGRQANESPSSLLKKRKQLSMDDYGKRRK). Positions 1032–1051 (KSATPSKRPSGRQANESPSS) are enriched in polar residues. Residues 1059-1069 (LSMDDYGKRRK) are compositionally biased toward basic and acidic residues.

Belongs to the SNF2/RAD54 helicase family. ISWI subfamily. Interacts with RLT1. Binds to FGT1. As to expression, highly expressed in growing tissues such as inflorescence and flower meristems, young leaves and floral organs. Expressed in roots, rosette and cauline leaves, stems, flowers, inflorescences and siliques.

It is found in the nucleus. Possesses intrinsic ATP-dependent nucleosome-remodeling activity. Constitutes the catalytic subunit of several complexes capable of forming ordered nucleosome arrays on chromatin. Involved in the formation of nucleosome distribution patterns. Required for the maintenance of the plant vegetative phase. In association with RLT1 or RLT2 may prevent the early activation of the vegetative-to-reproductive transition by regulating key genes that contribute to flower timing, such as FT, SEP1, SEP3, AGL8/FUL, SOC1 and FLC. Necessary to acquire heat stress (HS) memory. In Arabidopsis thaliana (Mouse-ear cress), this protein is ISWI chromatin-remodeling complex ATPase CHR17.